We begin with the raw amino-acid sequence, 454 residues long: Caspase-9 (454 aa).

Residues Met-1–Gly-92 form the CARD domain. Phosphothreonine; by MAPK1 is present on Thr-163. A Phosphotyrosine; by ABL1 modification is found at Tyr-191. Active-site residues include His-275 and Cys-325. Phosphoserine is present on residues Ser-340 and Ser-348. The propeptide occupies Ala-354 to Leu-367.

Belongs to the peptidase C14A family. Heterotetramer that consists of two anti-parallel arranged heterodimers, each one formed by a 35 kDa (p35) and a 10 kDa (p10) subunit. Caspase-9 and APAF1 bind to each other via their respective NH2-terminal CED-3 homologous domains in the presence of cytochrome C and ATP. Interacts (inactive form) with EFHD2. Interacts with HAX1. Interacts with BIRC2/c-IAP1, XIAP/BIRC4, BIRC5/survivin, BIRC6/bruce and BIRC7/livin. Interacts with ABL1 (via SH3 domain); the interaction is direct and increased in the response of cells to genotoxic stress and ABL1/c-Abl activation. Interacts with BCL2L10. Cleavages at Asp-353 by granzyme B and at Asp-368 by caspase-3 generate the two active subunits. Caspase-8 and -10 can also be involved in these processing events. In terms of processing, phosphorylated at Thr-163 by MAPK1/ERK2. Phosphorylation at Thr-163 is sufficient to block caspase-9 processing and subsequent caspase-3 activation. Phosphorylation on Tyr-191 by ABL1/c-Abl; occurs in the response of cells to DNA damage. Post-translationally, ubiquitinated by BIRC6; this activity is inhibited by DIABLO/SMAC.

The catalysed reaction is Strict requirement for an Asp residue at position P1 and with a marked preference for His at position P2. It has a preferred cleavage sequence of Leu-Gly-His-Asp-|-Xaa.. With respect to regulation, inhibited by BIRC6; following inhibition of BIRC6-caspase binding by DIABLO/SMAC, BIRC6 is subjected to caspase cleavage, leading to an increase in active caspases. Involved in the activation cascade of caspases responsible for apoptosis execution. Binding of caspase-9 to Apaf-1 leads to activation of the protease which then cleaves and activates effector caspases caspase-3 (CASP3) or caspase-7 (CASP7). Promotes DNA damage-induced apoptosis in a ABL1/c-Abl-dependent manner. Proteolytically cleaves poly(ADP-ribose) polymerase (PARP). Cleaves BIRC6 following inhibition of BIRC6-caspase binding by DIABLO/SMAC. The sequence is that of Caspase-9 (Casp9) from Mus musculus (Mouse).